An 88-amino-acid polypeptide reads, in one-letter code: Class II hydrophobin 5 (88 aa).

Positions M1–A14 are cleaved as a signal peptide. 4 disulfides stabilise this stretch: C27/C73, C35/C64, C36/C48, and C74/C85.

Belongs to the cerato-ulmin hydrophobin family. In terms of assembly, homotetramer. Further self-assembles to form highly ordered films at water-air interfaces through intermolecular interactions. As to expression, only appears on young aerial hyphae. HCf-5 is the most abundant transcript in sporulating mycelium.

It localises to the secreted. The protein localises to the cell wall. Functionally, aerial growth, conidiation, and dispersal of filamentous fungi in the environment rely upon a capability of their secreting small amphipathic proteins called hydrophobins (HPBs) with low sequence identity. Class I can self-assemble into an outermost layer of rodlet bundles on aerial cell surfaces, conferring cellular hydrophobicity that supports fungal growth, development and dispersal; whereas Class II form highly ordered films at water-air interfaces through intermolecular interactions but contribute nothing to the rodlet structure. The polypeptide is Class II hydrophobin 5 (Passalora fulva (Tomato leaf mold)).